Consider the following 79-residue polypeptide: uncharacterized protein (79 aa).

Residues 53–73 form a helical membrane-spanning segment; the sequence is LFFAYMVAYIGFGILSIGMIV.

Its subcellular location is the membrane. This is an uncharacterized protein from Escherichia coli O157:H7.